The sequence spans 102 residues: Small ribosomal subunit protein uS10 (102 aa).

The protein belongs to the universal ribosomal protein uS10 family. Part of the 30S ribosomal subunit.

In terms of biological role, involved in the binding of tRNA to the ribosomes. This Mycoplasma capricolum subsp. capricolum (strain California kid / ATCC 27343 / NCTC 10154) protein is Small ribosomal subunit protein uS10.